The sequence spans 253 residues: (S)-2-haloacid dehalogenase (253 aa).

Residue aspartate 8 is the Nucleophile of the active site. An (S)-2-haloacid contacts are provided by residues alanine 9 to tyrosine 10, arginine 39, and serine 114 to asparagine 115. Residues serine 171–aspartate 176 are important for catalytic activity.

This sequence belongs to the HAD-like hydrolase superfamily. S-2-haloalkanoic acid dehalogenase family. In terms of assembly, homodimer.

The enzyme catalyses an (S)-2-haloacid + H2O = a (2R)-2-hydroxycarboxylate + a halide anion + H(+). It catalyses the reaction (S)-2-chloropropanoate + H2O = (R)-lactate + chloride + H(+). Its function is as follows. Catalyzes the hydrolytic dehalogenation of small (S)-2-haloalkanoic acids to yield the corresponding (R)-2-hydroxyalkanoic acids. Acts on acids of short chain lengths, C(2) to C(4), with inversion of configuration at C-2. Active with 2-halogenated carboxylic acids and converts only the S-isomer (or L-isomer) of 2-chloropropionic acid with inversion of configuration to produce R-lactate (or D-isomer). The sequence is that of (S)-2-haloacid dehalogenase from Xanthobacter autotrophicus.